Consider the following 21-residue polypeptide: Ocellatin-3 (21 aa).

Ile21 bears the Isoleucine amide mark.

In terms of tissue distribution, expressed by the skin dorsal glands.

It localises to the secreted. Its function is as follows. Has hemolytic activity against human erythrocytes and antibacterial activity against the Gram-negative bacterium E.coli. This Leptodactylus ocellatus (Argus frog) protein is Ocellatin-3.